The sequence spans 313 residues: Methionyl-tRNA formyltransferase (313 aa).

112–115 (SLLP) contacts (6S)-5,6,7,8-tetrahydrofolate.

The protein belongs to the Fmt family.

The enzyme catalyses L-methionyl-tRNA(fMet) + (6R)-10-formyltetrahydrofolate = N-formyl-L-methionyl-tRNA(fMet) + (6S)-5,6,7,8-tetrahydrofolate + H(+). Its function is as follows. Attaches a formyl group to the free amino group of methionyl-tRNA(fMet). The formyl group appears to play a dual role in the initiator identity of N-formylmethionyl-tRNA by promoting its recognition by IF2 and preventing the misappropriation of this tRNA by the elongation apparatus. The chain is Methionyl-tRNA formyltransferase from Roseiflexus castenholzii (strain DSM 13941 / HLO8).